The following is an 85-amino-acid chain: uncharacterized protein (85 aa).

2 helical membrane passes run 14-34 (FLFG…RATI) and 60-80 (IFVY…IYFL).

The protein resides in the cell membrane. This is an uncharacterized protein from Escherichia coli O157:H7.